A 101-amino-acid chain; its full sequence is Large ribosomal subunit protein uL23c (101 aa).

It belongs to the universal ribosomal protein uL23 family. As to quaternary structure, part of the 50S ribosomal subunit.

The protein resides in the plastid. It is found in the chloroplast. In terms of biological role, binds to 23S rRNA. The chain is Large ribosomal subunit protein uL23c (rpl23) from Cyanidium caldarium (Red alga).